We begin with the raw amino-acid sequence, 665 residues long: DNA mismatch repair protein MutL (665 aa).

Belongs to the DNA mismatch repair MutL/HexB family.

Functionally, this protein is involved in the repair of mismatches in DNA. It is required for dam-dependent methyl-directed DNA mismatch repair. May act as a 'molecular matchmaker', a protein that promotes the formation of a stable complex between two or more DNA-binding proteins in an ATP-dependent manner without itself being part of a final effector complex. This chain is DNA mismatch repair protein MutL, found in Acidobacterium capsulatum (strain ATCC 51196 / DSM 11244 / BCRC 80197 / JCM 7670 / NBRC 15755 / NCIMB 13165 / 161).